The sequence spans 401 residues: Leucine aminopeptidase 1 (401 aa).

A signal peptide spans 1–18; it reads MKVAKASLLTILAHSVSA. A propeptide spanning residues 19-87 is cleaved from the precursor; sequence RFLAEDEINR…GATRLRTKTK (69 aa). Asn179 carries N-linked (GlcNAc...) asparagine glycosylation. Zn(2+) is bound by residues His187, Asp206, Glu245, and Asp272. A disulfide bridge connects residues Cys321 and Cys325. Zn(2+) is bound at residue His354.

Belongs to the peptidase M28 family. M28E subfamily. Monomer. It depends on Zn(2+) as a cofactor.

It is found in the secreted. Extracellular aminopeptidase that allows assimilation of proteinaceous substrates. The sequence is that of Leucine aminopeptidase 1 (LAP1) from Colletotrichum graminicola (strain M1.001 / M2 / FGSC 10212) (Maize anthracnose fungus).